A 397-amino-acid chain; its full sequence is B3 domain-containing protein At4g34400 (397 aa).

Residues 14-107 constitute a DNA-binding region (TF-B3); that stretch reads PRFFTVFVSH…IFEVSIFRGY (94 aa). A disordered region spans residues 118-255; that stretch reads ELEEEEEDSV…SSYAPDKEDT (138 aa). The span at 137-160 shows a compositional bias: basic and acidic residues; sequence TGAKSEMKNTVPEGRDKGKSKVEV. Acidic residues-rich tracts occupy residues 161 to 186, 212 to 227, and 235 to 246; these read VEDSDDDEEEDSVYSESSEETETDTD, SSDDEEDEEEDSDSDY, and DIEENSISEEDS.

It localises to the nucleus. This chain is B3 domain-containing protein At4g34400, found in Arabidopsis thaliana (Mouse-ear cress).